The chain runs to 82 residues: Diphthamide biosynthesis protein 3 (82 aa).

Residues 4–60 (FHDEVEIEDFQYDEDSETYFYPCPCGDNFAITKEDLENGEDVATCPSCSLIIKVIYD) form the DPH-type MB domain. 4 residues coordinate Fe cation: C26, C28, C48, and C51.

It belongs to the DPH3 family. Component of the 2-(3-amino-3-carboxypropyl)histidine synthase complex composed of DPH1, DPH2, DPH3 and a NADH-dependent reductase. Interacts with SERGEF. Fe(2+) serves as cofactor. In terms of tissue distribution, widely expressed with highest levels in heart, liver, kidney and testis.

The protein localises to the cytoplasm. Its subcellular location is the nucleus. It carries out the reaction [3Fe-4S](1+)-[protein] + Fe(2+)-[Dph3] = [3Fe-4S](0)-[protein] + Fe(3+)-[Dph3]. The enzyme catalyses 2 [3Fe-4S](0)-[protein] + 2 Fe(2+)-[Dph3] + NADH = 2 [4Fe-4S](1+)-[protein] + 2 [Dph3] + NAD(+) + H(+). The protein operates within protein modification; peptidyl-diphthamide biosynthesis. In terms of biological role, required for the first step of diphthamide biosynthesis, a post-translational modification of histidine which occurs in elongation factor 2. DPH1 and DPH2 transfer a 3-amino-3-carboxypropyl (ACP) group from S-adenosyl-L-methionine (SAM) to a histidine residue, the reaction is assisted by a reduction system comprising DPH3 and a NADH-dependent reductase. Acts as an electron donor to reduce the Fe-S cluster in DPH1-DPH2 keeping the [4Fe-4S] clusters in the active and reduced state. Restores iron to DPH1-DPH2 iron-sulfur clusters which have degraded from [4Fe-4S] to [3Fe-4S] by donating an iron atom to reform [4Fe-4S] clusters, in a manner dependent on the presence of elongation factor 2 and SAM. Associates with the elongator complex and is required for tRNA Wobble base modifications mediated by the elongator complex. The elongator complex is required for multiple tRNA modifications, including mcm5U (5-methoxycarbonylmethyl uridine), mcm5s 2U (5-methoxycarbonylmethyl-2-thiouridine), and ncm5U (5-carbamoylmethyl uridine). This Mus musculus (Mouse) protein is Diphthamide biosynthesis protein 3.